Here is a 1641-residue protein sequence, read N- to C-terminus: Histone-lysine N-methyltransferase SETD1 (1641 aa).

Residues 1 to 23 are disordered; it reads MQDVRNINLVNNSSNSHDSSLAN. The segment covering 8–23 has biased composition (low complexity); the sequence is NLVNNSSNSHDSSLAN. The RRM domain occupies 101 to 179; sequence VEVTIVNLND…KILDVFCDPF (79 aa). Disordered regions lie at residues 236-384, 537-596, 831-915, 930-949, 1119-1155, and 1205-1226; these read YTTQ…IDQR, APPF…SDEE, RIRK…SSSS, KART…NLNQ, QEKR…RKTA, and NSKG…SSQA. Residues 244–284 show a composition bias toward basic and acidic residues; the sequence is IPNRSRDRNWNRDKERERDRHFKERSRHSSERSYDRDRGMR. Over residues 291–300 the composition is skewed to basic residues; sequence IRRRRTFYRR. 2 stretches are compositionally biased toward basic and acidic residues: residues 308–341 and 349–384; these read EDSR…ESFR and KGRD…IDQR. Residues 556-568 are compositionally biased toward low complexity; it reads EVFSDVNSDSNNS. Composition is skewed to basic and acidic residues over residues 569–579 and 844–867; these read ENKKRSCEKNN and NFLE…KEDS. The segment covering 904-915 has biased composition (low complexity); sequence SASSFFSSSSSS. Basic and acidic residues-rich tracts occupy residues 930–939 and 1119–1128; these read KARTSEEDSP and QEKRIEKSLD. Residues 1091 to 1132 adopt a coiled-coil conformation; it reads SEEEKEYQERRKRNTEYMAQMEREFLEEQEKRIEKSLDKNLQ. Composition is skewed to polar residues over residues 1129-1145 and 1205-1217; these read KNLQ…NSPR and NSKG…QSPV. The RxxxRR motif motif lies at 1473-1478; sequence RSNQRR. Positions 1502–1619 constitute an SET domain; sequence KQLKFAKSAI…INEEITYDYK (118 aa). Tyrosine 1618 contacts S-adenosyl-L-methionine. A Post-SET domain is found at 1625 to 1641; it reads EKIPCLCGAQGCRGTLN.

Belongs to the class V-like SAM-binding methyltransferase superfamily. In terms of assembly, component of the Set1C/COMPASS complex, composed at least of the catalytic subunit Set1, wds/WDR5, Wdr82, Rbbp5, ash2, Cfp1/CXXC1, hcf and Dpy-30L1.

It is found in the nucleus. The protein localises to the chromosome. The enzyme catalyses L-lysyl(4)-[histone H3] + 3 S-adenosyl-L-methionine = N(6),N(6),N(6)-trimethyl-L-lysyl(4)-[histone H3] + 3 S-adenosyl-L-homocysteine + 3 H(+). The catalysed reaction is N(6)-methyl-L-lysyl(4)-[histone H3] + S-adenosyl-L-methionine = N(6),N(6)-dimethyl-L-lysyl(4)-[histone H3] + S-adenosyl-L-homocysteine + H(+). It carries out the reaction N(6),N(6)-dimethyl-L-lysyl(4)-[histone H3] + S-adenosyl-L-methionine = N(6),N(6),N(6)-trimethyl-L-lysyl(4)-[histone H3] + S-adenosyl-L-homocysteine + H(+). Functionally, catalytic component of the COMPASS (Set1C) complex that specifically mono-, di- and trimethylates histone H3 to form H3K4me1/2/3. Binds RNAs which might negatively affect its histone methyltransferase activity. COMPASS recognizes ubiquitinated H2B on one face of the nucleosome which stimulates the methylation of H3 on the opposing face. Set1-dependent trimethylation regulates chromatin changes at active promoters that ensure optimal RNA polymerase II release into productive elongation, thereby contributing to optimal transcription. This chain is Histone-lysine N-methyltransferase SETD1, found in Drosophila melanogaster (Fruit fly).